The following is a 137-amino-acid chain: Large ribosomal subunit protein bL17 (137 aa).

This sequence belongs to the bacterial ribosomal protein bL17 family. Part of the 50S ribosomal subunit. Contacts protein L32.

This Caulobacter sp. (strain K31) protein is Large ribosomal subunit protein bL17.